Consider the following 488-residue polypeptide: Inosine-5'-monophosphate dehydrogenase (488 aa).

CBS domains follow at residues 95–153 (VITN…SIKI) and 157–213 (MTKE…PHAA). NAD(+) contacts are provided by residues Asp-250 and 300 to 302 (GIG). Positions 302 and 304 each coordinate K(+). Position 305 (Ser-305) interacts with IMP. K(+) is bound at residue Cys-307. Cys-307 functions as the Thioimidate intermediate in the catalytic mechanism. Residues 340-342 (DGG), 363-364 (GS), and 387-391 (YRGMG) contribute to the IMP site. The active-site Proton acceptor is Arg-403. Glu-417 is a binding site for IMP. Positions 467–488 (AGLAESHPHNVQITKESPNYSF) are disordered. Glu-471, Ser-472, and His-473 together coordinate K(+). The span at 475–488 (HNVQITKESPNYSF) shows a compositional bias: polar residues.

This sequence belongs to the IMPDH/GMPR family. In terms of assembly, homotetramer. It depends on K(+) as a cofactor.

The enzyme catalyses IMP + NAD(+) + H2O = XMP + NADH + H(+). It participates in purine metabolism; XMP biosynthesis via de novo pathway; XMP from IMP: step 1/1. Mycophenolic acid (MPA) is a non-competitive inhibitor that prevents formation of the closed enzyme conformation by binding to the same site as the amobile flap. In contrast, mizoribine monophosphate (MZP) is a competitive inhibitor that induces the closed conformation. MPA is a potent inhibitor of mammalian IMPDHs but a poor inhibitor of the bacterial enzymes. MZP is a more potent inhibitor of bacterial IMPDH. Catalyzes the conversion of inosine 5'-phosphate (IMP) to xanthosine 5'-phosphate (XMP), the first committed and rate-limiting step in the de novo synthesis of guanine nucleotides, and therefore plays an important role in the regulation of cell growth. In Staphylococcus haemolyticus (strain JCSC1435), this protein is Inosine-5'-monophosphate dehydrogenase.